Consider the following 370-residue polypeptide: Chaperone protein DnaJ (370 aa).

Positions 5-69 (DYYEVLGVDR…QKKAHYDQFG (65 aa)) constitute a J domain. The CR-type zinc finger occupies 128 to 210 (GKETTIEIPR…CGGKGKVRKR (83 aa)). The Zn(2+) site is built by cysteine 141, cysteine 144, cysteine 158, cysteine 161, cysteine 184, cysteine 187, cysteine 198, and cysteine 201. CXXCXGXG motif repeat units follow at residues 141 to 148 (CHTCSGSG), 158 to 165 (CPHCGGSG), 184 to 191 (CHHCEGTG), and 198 to 205 (CATCGGKG).

This sequence belongs to the DnaJ family. In terms of assembly, homodimer. The cofactor is Zn(2+).

It localises to the cytoplasm. Participates actively in the response to hyperosmotic and heat shock by preventing the aggregation of stress-denatured proteins and by disaggregating proteins, also in an autonomous, DnaK-independent fashion. Unfolded proteins bind initially to DnaJ; upon interaction with the DnaJ-bound protein, DnaK hydrolyzes its bound ATP, resulting in the formation of a stable complex. GrpE releases ADP from DnaK; ATP binding to DnaK triggers the release of the substrate protein, thus completing the reaction cycle. Several rounds of ATP-dependent interactions between DnaJ, DnaK and GrpE are required for fully efficient folding. Also involved, together with DnaK and GrpE, in the DNA replication of plasmids through activation of initiation proteins. This is Chaperone protein DnaJ from Halalkalibacterium halodurans (strain ATCC BAA-125 / DSM 18197 / FERM 7344 / JCM 9153 / C-125) (Bacillus halodurans).